The chain runs to 137 residues: Partner of bursicon (137 aa).

An N-terminal signal peptide occupies residues Met1–Ala24. Cystine bridges form between Cys28–Cys86, Cys52–Cys101, Cys61–Cys127, Cys65–Cys129, and Cys83–Cys132. A CTCK domain is found at Cys28–Glu123.

In terms of assembly, heterodimer of burs and pburs.

Its subcellular location is the secreted. Its function is as follows. Final heterodimeric neurohormone released at the end of the molting cycle, involved in the sclerotization (tanning) of the insect cuticle, melanization and wing spreading. The chain is Partner of bursicon from Bombyx mori (Silk moth).